Here is a 434-residue protein sequence, read N- to C-terminus: 3-phosphoshikimate 1-carboxyvinyltransferase (434 aa).

3-phosphoshikimate is bound by residues Lys-22, Ser-23, and Arg-27. Lys-22 provides a ligand contact to phosphoenolpyruvate. Residues Gly-94 and Arg-122 each contribute to the phosphoenolpyruvate site. 6 residues coordinate 3-phosphoshikimate: Ser-169, Ser-170, Gln-171, Ser-199, Asp-320, and Lys-347. Gln-171 is a phosphoenolpyruvate binding site. Residue Asp-320 is the Proton acceptor of the active site. Residues Arg-351, Arg-395, and Lys-420 each coordinate phosphoenolpyruvate.

This sequence belongs to the EPSP synthase family. As to quaternary structure, monomer.

The protein resides in the cytoplasm. The catalysed reaction is 3-phosphoshikimate + phosphoenolpyruvate = 5-O-(1-carboxyvinyl)-3-phosphoshikimate + phosphate. Its pathway is metabolic intermediate biosynthesis; chorismate biosynthesis; chorismate from D-erythrose 4-phosphate and phosphoenolpyruvate: step 6/7. In terms of biological role, catalyzes the transfer of the enolpyruvyl moiety of phosphoenolpyruvate (PEP) to the 5-hydroxyl of shikimate-3-phosphate (S3P) to produce enolpyruvyl shikimate-3-phosphate and inorganic phosphate. This is 3-phosphoshikimate 1-carboxyvinyltransferase from Ralstonia pickettii (strain 12J).